Reading from the N-terminus, the 261-residue chain is Fructoselysine 6-kinase (261 aa).

It belongs to the carbohydrate kinase PfkB family. As to quaternary structure, monomer.

It catalyses the reaction N(6)-(D-fructosyl)-L-lysine + ATP = N(6)-(6-phospho-D-fructosyl)-L-lysine + ADP + H(+). The protein operates within carbohydrate metabolism; fructoselysine degradation; D-glucose 6-phosphate and lysine from fructoselysine: step 1/2. Functionally, catalyzes the ATP-dependent phosphorylation of fructoselysine to fructoselysine 6-phosphate. Functions in a fructoselysine degradation pathway that allows E.coli to grow on fructoselysine or psicoselysine. To a much lesser extenst, is also able to phosphorylate psicoselysine. The protein is Fructoselysine 6-kinase of Escherichia coli (strain K12).